We begin with the raw amino-acid sequence, 96 residues long: Co-chaperonin GroES (96 aa).

It belongs to the GroES chaperonin family. As to quaternary structure, heptamer of 7 subunits arranged in a ring. Interacts with the chaperonin GroEL.

It localises to the cytoplasm. In terms of biological role, together with the chaperonin GroEL, plays an essential role in assisting protein folding. The GroEL-GroES system forms a nano-cage that allows encapsulation of the non-native substrate proteins and provides a physical environment optimized to promote and accelerate protein folding. GroES binds to the apical surface of the GroEL ring, thereby capping the opening of the GroEL channel. The chain is Co-chaperonin GroES from Acidithiobacillus ferrooxidans (strain ATCC 23270 / DSM 14882 / CIP 104768 / NCIMB 8455) (Ferrobacillus ferrooxidans (strain ATCC 23270)).